The sequence spans 527 residues: Serine/threonine-protein kinase NLK (527 aa).

Sufficient for interaction with DAPK3 regions lie at residues 1–125 (MSLC…KAHH) and 124–416 (HHHQ…SKRI). Required for interaction with TAB2 regions lie at residues 1 to 304 (MSLC…VVTQ) and 434 to 527 (YHTC…LVWE). 2 disordered regions span residues 22–72 (AAAA…SSAA) and 90–140 (QQPY…DIEP). Residues 26–54 (GHHHHHHHHLPHLPPPHLHHHHHPQHHLH) show a composition bias toward basic residues. Over residues 103–119 (PGPAAAAPAQVQAAAAA) the composition is skewed to low complexity. Positions 122-131 (KAHHHQHSHH) are enriched in basic residues. In terms of domain architecture, Protein kinase spans 138–427 (IEPDRPIGYG…AKDALAHPYL (290 aa)). ATP-binding positions include 144-152 (IGYGAFGVV) and Lys167. Residue Asp264 is the Proton acceptor of the active site. Position 298 is a phosphothreonine; by autocatalysis (Thr298). The TQE signature appears at 298–300 (TQE). The required for homodimerization and kinase activation and localization to the nucleus stretch occupies residues 428-527 (DEGRLRYHTC…EMPPSPLVWE (100 aa)). Ser522 is modified (phosphoserine).

Belongs to the protein kinase superfamily. CMGC Ser/Thr protein kinase family. MAP kinase subfamily. In terms of assembly, homodimer. Homodimerization is required for intermolecular autophosphorylation, kinase activation and nuclear localization. May interact with components of cullin-RING-based SCF (SKP1-CUL1-F-box protein) E3 ubiquitin-protein ligase complexes. Interacts with LEF1, MEF2A, MYBL1 and MYBL2. Interacts with the upstream activating kinases HIPK2 and MAP3K7/TAK1. Interaction with MAP3K7/TAK1 seems to be indirect, and may be mediated by other proteins such as STAT3, TAB1 and TAB2. Interacts with and phosphorylates a number of transcription factors including FOXO1, FOXO3, FOXO4, MYB, NOTCH1 and TCF7L2/TCF4. Interacts with DAPK3/ZIPK, and this interaction may disrupt interaction with transcription factors such as TCF7L2/TCF4. Interacts with RNF138/NARF. Interacts with ATF5; the interaction stabilizes ATF5 at the protein level in a kinase-independent manner. It depends on Mg(2+) as a cofactor. In terms of processing, phosphorylated on Thr-298. Intermolecular autophosphorylation on Thr-298 activates the enzyme.

Its subcellular location is the nucleus. The protein resides in the cytoplasm. It carries out the reaction L-seryl-[protein] + ATP = O-phospho-L-seryl-[protein] + ADP + H(+). It catalyses the reaction L-threonyl-[protein] + ATP = O-phospho-L-threonyl-[protein] + ADP + H(+). Activated by dimerization and subsequent intermolecular autophosphorylation on Thr-298. Activated by the non-canonical Wnt signaling pathway, in which WNT5A treatment leads to activation of MAP3K7/TAK1 and HIPK2, which subsequently phosphorylates and activates this protein. Other cytokines such as IL6 may also activate this regulatory circuit. Functionally, serine/threonine-protein kinase that regulates a number of transcription factors with key roles in cell fate determination. Positive effector of the non-canonical Wnt signaling pathway, acting downstream of WNT5A, MAP3K7/TAK1 and HIPK2. Negative regulator of the canonical Wnt/beta-catenin signaling pathway. Binds to and phosphorylates TCF7L2/TCF4 and LEF1, promoting the dissociation of the TCF7L2/LEF1/beta-catenin complex from DNA, as well as the ubiquitination and subsequent proteolysis of LEF1. Together these effects inhibit the transcriptional activation of canonical Wnt/beta-catenin target genes. Negative regulator of the Notch signaling pathway. Binds to and phosphorylates NOTCH1, thereby preventing the formation of a transcriptionally active ternary complex of NOTCH1, RBPJ/RBPSUH and MAML1. Negative regulator of the MYB family of transcription factors. Phosphorylation of MYB leads to its subsequent proteolysis while phosphorylation of MYBL1 and MYBL2 inhibits their interaction with the coactivator CREBBP. Other transcription factors may also be inhibited by direct phosphorylation of CREBBP itself. Acts downstream of IL6 and MAP3K7/TAK1 to phosphorylate STAT3, which is in turn required for activation of NLK by MAP3K7/TAK1. Upon IL1B stimulus, cooperates with ATF5 to activate the transactivation activity of C/EBP subfamily members. Phosphorylates ATF5 but also stabilizes ATF5 protein levels in a kinase-independent manner. Acts as an inhibitor of the mTORC1 complex in response to osmotic stress by mediating phosphorylation of RPTOR, thereby preventing recruitment of the mTORC1 complex to lysosomes. The polypeptide is Serine/threonine-protein kinase NLK (NLK) (Homo sapiens (Human)).